A 535-amino-acid polypeptide reads, in one-letter code: T-complex protein 1 subunit beta (535 aa).

Residue Ala-2 is modified to N-acetylalanine. Position 3 is a phosphoserine (Ser-3). An N6-acetyllysine modification is found at Lys-13. Gly-44 serves as a coordination point for ADP. Gly-44 lines the ATP pocket. Ser-60 is subject to Phosphoserine. Residue Asp-97 participates in Mg(2+) binding. ADP contacts are provided by Gly-98, Thr-99, Thr-100, and Ser-101. The ATP site is built by Gly-98, Thr-99, and Thr-100. Position 154 is an N6-acetyllysine (Lys-154). Residues Ser-168 and Ser-169 each coordinate ADP. Residue Lys-181 is modified to N6-acetyllysine. Residue Lys-248 forms a Glycyl lysine isopeptide (Lys-Gly) (interchain with G-Cter in SUMO2) linkage. Ser-260 carries the phosphoserine modification. Phosphothreonine is present on Thr-261. Gly-410, Glu-495, and Lys-500 together coordinate ADP. ATP is bound by residues Glu-495 and Lys-500.

Belongs to the TCP-1 chaperonin family. Component of the chaperonin-containing T-complex (TRiC), a hexadecamer composed of two identical back-to-back stacked rings enclosing a protein folding chamber. Each ring is made up of eight different subunits: TCP1/CCT1, CCT2, CCT3, CCT4, CCT5, CCT6A/CCT6, CCT7, CCT8. Interacts with PACRG. Interacts with FLCN. Interacts with DLEC1. Interacts with SVEP1.

The protein resides in the cytoplasm. It carries out the reaction ATP + H2O = ADP + phosphate + H(+). In terms of biological role, component of the chaperonin-containing T-complex (TRiC), a molecular chaperone complex that assists the folding of actin, tubulin and other proteins upon ATP hydrolysis. The TRiC complex mediates the folding of WRAP53/TCAB1, thereby regulating telomere maintenance. As part of the TRiC complex may play a role in the assembly of BBSome, a complex involved in ciliogenesis regulating transports vesicles to the cilia. The protein is T-complex protein 1 subunit beta (Cct2) of Rattus norvegicus (Rat).